The primary structure comprises 89 residues: Translation initiation factor IF-1, chloroplastic (89 aa).

An S1-like domain is found at 1 to 72; it reads MKKQDLIDME…TKGRIIYRLR (72 aa).

It belongs to the IF-1 family. Component of the 30S ribosomal translation pre-initiation complex which assembles on the 30S ribosome in the order IF-2 and IF-3, IF-1 and N-formylmethionyl-tRNA(fMet); mRNA recruitment can occur at any time during PIC assembly.

Its subcellular location is the plastid. The protein localises to the chloroplast. Functionally, one of the essential components for the initiation of protein synthesis. Stabilizes the binding of IF-2 and IF-3 on the 30S subunit to which N-formylmethionyl-tRNA(fMet) subsequently binds. Helps modulate mRNA selection, yielding the 30S pre-initiation complex (PIC). Upon addition of the 50S ribosomal subunit IF-1, IF-2 and IF-3 are released leaving the mature 70S translation initiation complex. The chain is Translation initiation factor IF-1, chloroplastic from Angiopteris evecta (Mule's foot fern).